The primary structure comprises 621 residues: uncharacterized protein (621 aa).

A signal peptide spans 1-15; sequence MRRSVCYVTPSVARA.

This sequence belongs to the chlamydial CPn_0512/CT_425/TC_0708 family.

This is an uncharacterized protein from Chlamydia trachomatis serovar D (strain ATCC VR-885 / DSM 19411 / UW-3/Cx).